Here is a 141-residue protein sequence, read N- to C-terminus: Large ribosomal subunit protein bL17 (141 aa).

Belongs to the bacterial ribosomal protein bL17 family. As to quaternary structure, part of the 50S ribosomal subunit. Contacts protein L32.

The polypeptide is Large ribosomal subunit protein bL17 (Chlamydia trachomatis serovar D (strain ATCC VR-885 / DSM 19411 / UW-3/Cx)).